We begin with the raw amino-acid sequence, 142 residues long: Large ribosomal subunit protein uL23 (142 aa).

Belongs to the universal ribosomal protein uL23 family.

The sequence is that of Large ribosomal subunit protein uL23 (RPL25) from Kluyveromyces lactis (strain ATCC 8585 / CBS 2359 / DSM 70799 / NBRC 1267 / NRRL Y-1140 / WM37) (Yeast).